Here is a 75-residue protein sequence, read N- to C-terminus: UPF0270 protein PSPTO_1630 (75 aa).

The protein belongs to the UPF0270 family.

The chain is UPF0270 protein PSPTO_1630 from Pseudomonas syringae pv. tomato (strain ATCC BAA-871 / DC3000).